The chain runs to 248 residues: Pyridoxine 5'-phosphate synthase (248 aa).

Asn-7 contributes to the 3-amino-2-oxopropyl phosphate binding site. 9–10 (DH) is a 1-deoxy-D-xylulose 5-phosphate binding site. A 3-amino-2-oxopropyl phosphate-binding site is contributed by Arg-18. His-52 serves as the catalytic Proton acceptor. Positions 54 and 59 each coordinate 1-deoxy-D-xylulose 5-phosphate. Catalysis depends on Glu-79, which acts as the Proton acceptor. Thr-109 contributes to the 1-deoxy-D-xylulose 5-phosphate binding site. His-201 functions as the Proton donor in the catalytic mechanism. 3-amino-2-oxopropyl phosphate is bound by residues Gly-202 and 223 to 224 (GH).

It belongs to the PNP synthase family. Homooctamer; tetramer of dimers.

Its subcellular location is the cytoplasm. It catalyses the reaction 3-amino-2-oxopropyl phosphate + 1-deoxy-D-xylulose 5-phosphate = pyridoxine 5'-phosphate + phosphate + 2 H2O + H(+). Its pathway is cofactor biosynthesis; pyridoxine 5'-phosphate biosynthesis; pyridoxine 5'-phosphate from D-erythrose 4-phosphate: step 5/5. Functionally, catalyzes the complicated ring closure reaction between the two acyclic compounds 1-deoxy-D-xylulose-5-phosphate (DXP) and 3-amino-2-oxopropyl phosphate (1-amino-acetone-3-phosphate or AAP) to form pyridoxine 5'-phosphate (PNP) and inorganic phosphate. The polypeptide is Pyridoxine 5'-phosphate synthase (Opitutus terrae (strain DSM 11246 / JCM 15787 / PB90-1)).